The sequence spans 1231 residues: Complement factor H (1231 aa).

Positions 1–18 are cleaved as a signal peptide; the sequence is MRLLAKIICLMLWAICVA. Sushi domains lie at 19–82, 83–143, 144–207, 208–264, 265–322, 324–386, 387–444, 446–507, 515–566, 567–625, 628–686, 689–746, 751–805, 809–866, 868–928, 929–986, 987–1045, 1046–1104, 1107–1165, and 1170–1230; these read EDCN…KCQK, RPCG…ICEV, VKCL…KCVE, ISCK…SCEE, KSCD…RCTL, PCDY…VPCL, RKCY…RCIR, KTCS…TCIK, MNAR…ICYE, RECE…ICKE, QSCG…VCIV, STCG…QCVA, KKCK…NCSM, QLCP…LCVE, IPCS…QCEG, LPCK…SCIK, TDCL…TCRD, TSCV…QCKD, GKCG…KCLH, and SREI…TCAK. Cystine bridges form between Cys-21–Cys-66, Cys-52–Cys-80, Cys-85–Cys-129, Cys-114–Cys-141, Cys-146–Cys-192, Cys-178–Cys-205, Cys-210–Cys-251, Cys-237–Cys-262, Cys-267–Cys-309, Cys-294–Cys-320, Cys-325–Cys-374, Cys-357–Cys-385, Cys-389–Cys-431, Cys-416–Cys-442, Cys-448–Cys-494, Cys-477–Cys-505, Cys-509–Cys-553, Cys-536–Cys-564, Cys-569–Cys-611, Cys-597–Cys-623, Cys-630–Cys-673, Cys-659–Cys-684, Cys-691–Cys-733, Cys-719–Cys-744, Cys-753–Cys-792, Cys-781–Cys-803, Cys-811–Cys-853, Cys-839–Cys-864, Cys-870–Cys-915, Cys-901–Cys-926, Cys-931–Cys-973, Cys-959–Cys-984, Cys-989–Cys-1032, Cys-1018–Cys-1043, Cys-1048–Cys-1091, Cys-1077–Cys-1102, Cys-1109–Cys-1152, Cys-1138–Cys-1163, Cys-1167–Cys-1218, and Cys-1201–Cys-1228. Asn-217 carries N-linked (GlcNAc...) (complex) asparagine glycosylation. Asn-529 carries an N-linked (GlcNAc...) asparagine glycan. Residue Asn-718 is glycosylated (N-linked (GlcNAc...) asparagine). N-linked (GlcNAc...) asparagine glycans are attached at residues Asn-802 and Asn-822. N-linked (GlcNAc...) (complex) asparagine glycans are attached at residues Asn-882 and Asn-911. N-linked (GlcNAc...) (complex) asparagine glycosylation occurs at Asn-1029. Asn-1095 carries N-linked (GlcNAc...) asparagine glycosylation.

As to quaternary structure, homodimer. Also forms homooligomers. Interacts with complement protein C3b; this interaction inhibits complement activation. Interacts with complement protein C3d. Interacts with CR3/ITGAM; this interaction mediates adhesion of neutrophils to pathogens leading to pathogen clearance. Interacts with complement factor I. In terms of assembly, (Microbial infection) Interacts with West nile virus non-structural protein 1 (NS1); this interaction leads to the degradation of C3. (Microbial infection) Interacts with C.albicans GPD2; the interaction is direct and leads to the degradation of C3 which enables the pathogen to evade the host innate immune system. As to quaternary structure, (Microbial infection) Interacts with Neisseria meningitidis protein fHbp. In terms of assembly, (Microbial infection) Interacts with Borrelia burgdorferi outer surface protein E/OspE; this interaction recruits complement regulator factor H onto the bacterial surface to evade complement-mediated cell lysis. (Microbial infection) Interacts with Streptococcus pneumoniae protein virulence factor choline-binding protein A/CbpAN; this interaction enables Streptococcus pneumoniae to evade surveillance by human complement system. As to quaternary structure, (Microbial infection) Interacts with Staphylococcus aureus surface protein serine-aspartate repeat protein E/SdrE; this interaction sequesters CFH on the surface of S.aureus for complement evasion. In terms of assembly, (Microbial infection) Interacts with Staphylococcus aureus protein Sbi; this interaction inhibits the complement activation of the alternative pathway. (Microbial infection) Interacts (via sushi 4-6 domains) with P.falciparum surface protein PF92; the interaction recruits CFH onto the merozoite surface preventing complement-mediated cell lysis. The interaction does not affect CFH activity. Interacts (via sushi 6-7 domains) with P.falciparum (strain NF54) GAP50; the interaction occurs in the vector mosquito midgut at the surface of the activated parasite gametocytes; the interaction protects the parasite from alternative complement pathway-mediated elimination. As to quaternary structure, (Microbial infection) Interacts (via sushi 4-6 domains) with P.falciparum surface protein PF92; the interaction recruits FHL-1 isoform onto the merozoite surface preventing complement-mediated cell lysis. The interaction does not affect FHL-1 isoform activity. Interacts (via sushi 6-7 domains) with P.falciparum (strain NF54) GAP50; the interaction occurs in the vector mosquito midgut at the surface of the activated parasite gametocytes; the interaction protects the parasite from alternative complement pathway-mediated elimination. Post-translationally, sulfated on tyrosine residues. In terms of processing, according to a report, Asn-217 is not glycosylated. Another study observed glycosylation at this position. As to expression, expressed in the retinal pigment epithelium (at protein level). CFH is one of the most abundant complement components in blood where the liver is the major source of CFH protein in vivo. in addition, CFH is secreted by additional cell types including monocytes, fibroblasts, or endothelial cells.

The protein resides in the secreted. In terms of biological role, glycoprotein that plays an essential role in maintaining a well-balanced immune response by modulating complement activation. Acts as a soluble inhibitor of complement, where its binding to self markers such as glycan structures prevents complement activation and amplification on cell surfaces. Accelerates the decay of the complement alternative pathway (AP) C3 convertase C3bBb, thus preventing local formation of more C3b, the central player of the complement amplification loop. As a cofactor of the serine protease factor I, CFH also regulates proteolytic degradation of already-deposited C3b. In addition, mediates several cellular responses through interaction with specific receptors. For example, interacts with CR3/ITGAM receptor and thereby mediates the adhesion of human neutrophils to different pathogens. In turn, these pathogens are phagocytosed and destroyed. (Microbial infection) In the mosquito midgut, binds to the surface of parasite P.falciparum gametocytes and protects the parasite from alternative complement pathway-mediated elimination. The protein is Complement factor H (CFH) of Homo sapiens (Human).